The following is a 461-amino-acid chain: Photosynthetic NDH subunit of subcomplex B 1, chloroplastic (461 aa).

Residues 1-44 constitute a chloroplast transit peptide; sequence MASSLPLLPKPISPFFKTPPFSTSKPLVFLNFQTRLTSRSSDVS. The segment at 66–90 is disordered; the sequence is NEYGSLFADGKQDEDPRPPDNPDNP. Basic and acidic residues predominate over residues 75–85; the sequence is GKQDEDPRPPD.

As to quaternary structure, part of the chloroplast NDH complex, composed of a mixture of chloroplast and nucleus encoded subunits. Component of the NDH subcomplex B, at least composed of PnsB1, PnsB2, PnsB3, PnsB4 and PnsB5.

The protein localises to the plastid. It is found in the chloroplast thylakoid membrane. Its function is as follows. NDH shuttles electrons from NAD(P)H:plastoquinone, via FMN and iron-sulfur (Fe-S) centers, to quinones in the photosynthetic chain and possibly in a chloroplast respiratory chain. The immediate electron acceptor for the enzyme in this species is believed to be plastoquinone. Couples the redox reaction to proton translocation, and thus conserves the redox energy in a proton gradient. This is Photosynthetic NDH subunit of subcomplex B 1, chloroplastic from Arabidopsis thaliana (Mouse-ear cress).